A 124-amino-acid polypeptide reads, in one-letter code: MARIAGVDLPSNKKVEIALTYIYGIGRTTSKKILQATGVDPNKRVKDLTEEEISKLREEIENNYKVEGDLRQEVAANIRRLIEIGCYRGIRHKRGLPVRGQRTRCNARTRKGPRKTVGAKRKEK.

The interval V98–K124 is disordered.

It belongs to the universal ribosomal protein uS13 family. In terms of assembly, part of the 30S ribosomal subunit. Forms a loose heterodimer with protein S19. Forms two bridges to the 50S subunit in the 70S ribosome.

In terms of biological role, located at the top of the head of the 30S subunit, it contacts several helices of the 16S rRNA. In the 70S ribosome it contacts the 23S rRNA (bridge B1a) and protein L5 of the 50S subunit (bridge B1b), connecting the 2 subunits; these bridges are implicated in subunit movement. Contacts the tRNAs in the A and P-sites. This chain is Small ribosomal subunit protein uS13, found in Dictyoglomus turgidum (strain DSM 6724 / Z-1310).